Here is a 533-residue protein sequence, read N- to C-terminus: Zinc finger protein 26 (533 aa).

The KRAB domain maps to 14–85; sequence LSFKDISMEF…NAKISRQSCP (72 aa). 13 C2H2-type zinc fingers span residues 174–196, 202–224, 230–252, 258–280, 286–308, 314–336, 342–364, 370–392, 398–420, 426–448, 454–476, 482–504, and 510–532; these read CVCSECGKAFRCKSQLIVHLRIH, YECSKCERAFSAKSNLNAHQRVH, YSCSECEKVFSFRSQLIVHQEIH, YGCSECGKAYSWKSQLLLHQRSH, YECSECGKAFSLKSPFVVHQRTH, HKCSECGKAFRSKSYLLVHIRMH, YQCSDCGKAFNMKTQLIVHQGVH, YQCGECGKAFGRKEQLTAHLRAH, YGCSECGKAFSSKSYLVIHRRTH, YECSLCERAFCGKSQLIIHQRTH, YECNECEKAYPRKASLQIHQKTH, FKCSECGKAFTQKSSLSEHQRVH, and WKCSECGKSFCWNSGLRIHRKTH.

It belongs to the krueppel C2H2-type zinc-finger protein family.

It is found in the nucleus. In terms of biological role, may be involved in transcriptional regulation. In Homo sapiens (Human), this protein is Zinc finger protein 26 (ZNF26).